The sequence spans 173 residues: Thiol-disulfide oxidoreductase ResA (173 aa).

The helical; Signal-anchor for type II membrane protein transmembrane segment at 10–29 (VIILLILCGAVGFTLYQGYF) threads the bilayer. The 139-residue stretch at 35 to 173 (MEIGKEAPNF…LEEYLKKITP (139 aa)) folds into the Thioredoxin domain. C73 and C76 are oxidised to a cystine.

The protein belongs to the thioredoxin family. ResA subfamily.

Its subcellular location is the cell membrane. Its pathway is protein modification; cytochrome c assembly. Functionally, thiol-disulfide oxidoreductase which is required in disulfide reduction during c-type cytochrome synthesis. May accept reducing equivalents from CcdA, leading to breakage of disulfide bonds in apocytochrome c; following this reduction heme can be covalently attached. The polypeptide is Thiol-disulfide oxidoreductase ResA (Bacillus thuringiensis subsp. konkukian (strain 97-27)).